A 464-amino-acid chain; its full sequence is ATP synthase subunit beta (464 aa).

148-155 (GGAGVGKT) serves as a coordination point for ATP.

It belongs to the ATPase alpha/beta chains family. In terms of assembly, F-type ATPases have 2 components, CF(1) - the catalytic core - and CF(0) - the membrane proton channel. CF(1) has five subunits: alpha(3), beta(3), gamma(1), delta(1), epsilon(1). CF(0) has three main subunits: a(1), b(2) and c(9-12). The alpha and beta chains form an alternating ring which encloses part of the gamma chain. CF(1) is attached to CF(0) by a central stalk formed by the gamma and epsilon chains, while a peripheral stalk is formed by the delta and b chains.

It is found in the cell inner membrane. The enzyme catalyses ATP + H2O + 4 H(+)(in) = ADP + phosphate + 5 H(+)(out). In terms of biological role, produces ATP from ADP in the presence of a proton gradient across the membrane. The catalytic sites are hosted primarily by the beta subunits. The chain is ATP synthase subunit beta from Acinetobacter baumannii (strain AB0057).